A 390-amino-acid chain; its full sequence is Putative nickel insertion protein (390 aa).

Belongs to the LarC family.

The sequence is that of Putative nickel insertion protein from Geotalea daltonii (strain DSM 22248 / JCM 15807 / FRC-32) (Geobacter daltonii).